The primary structure comprises 205 residues: Large ribosomal subunit protein uL3 (205 aa).

This sequence belongs to the universal ribosomal protein uL3 family. As to quaternary structure, part of the 50S ribosomal subunit. Forms a cluster with proteins L14 and L19.

In terms of biological role, one of the primary rRNA binding proteins, it binds directly near the 3'-end of the 23S rRNA, where it nucleates assembly of the 50S subunit. The protein is Large ribosomal subunit protein uL3 of Parabacteroides distasonis (strain ATCC 8503 / DSM 20701 / CIP 104284 / JCM 5825 / NCTC 11152).